The following is a 78-amino-acid chain: Acyl carrier protein (78 aa).

Residues 1–75 (MIKEKILSIV…DLISVVKNST (75 aa)) form the Carrier domain. Ser35 carries the O-(pantetheine 4'-phosphoryl)serine modification.

It belongs to the acyl carrier protein (ACP) family. Post-translationally, 4'-phosphopantetheine is transferred from CoA to a specific serine of apo-ACP by AcpS. This modification is essential for activity because fatty acids are bound in thioester linkage to the sulfhydryl of the prosthetic group.

It is found in the cytoplasm. It participates in lipid metabolism; fatty acid biosynthesis. In terms of biological role, carrier of the growing fatty acid chain in fatty acid biosynthesis. In Shigella flexneri, this protein is Acyl carrier protein (acpP).